Reading from the N-terminus, the 297-residue chain is 33 kDa chaperonin (297 aa).

2 disulfide bridges follow: cysteine 232–cysteine 234 and cysteine 266–cysteine 269.

Belongs to the HSP33 family. Post-translationally, under oxidizing conditions two disulfide bonds are formed involving the reactive cysteines. Under reducing conditions zinc is bound to the reactive cysteines and the protein is inactive.

It localises to the cytoplasm. In terms of biological role, redox regulated molecular chaperone. Protects both thermally unfolding and oxidatively damaged proteins from irreversible aggregation. Plays an important role in the bacterial defense system toward oxidative stress. This is 33 kDa chaperonin from Pseudomonas aeruginosa (strain LESB58).